Consider the following 180-residue polypeptide: Probable DNA replication complex GINS protein PSF2 (180 aa).

This sequence belongs to the GINS2/PSF2 family. As to quaternary structure, component of the GINS complex which is a heterotetramer of gins1, gins2, gins3 and gins4.

The protein resides in the nucleus. Its function is as follows. Required for correct functioning of the GINS complex, a complex that plays an essential role in the initiation of DNA replication, and progression of DNA replication forks. GINS complex is a core component of CDC45-MCM-GINS (CMG) helicase, the molecular machine that unwinds template DNA during replication, and around which the replisome is built. In Caenorhabditis elegans, this protein is Probable DNA replication complex GINS protein PSF2 (psf-2).